Here is a 247-residue protein sequence, read N- to C-terminus: ATP synthase subunit a (247 aa).

6 helical membrane passes run 23–43, 90–110, 116–136, 145–165, 194–214, and 215–235; these read ISFT…TLFL, LFMF…VIGF, VIVT…IGFA, MFFP…IELI, GFVV…FAFL, and SAIT…FTIL.

This sequence belongs to the ATPase A chain family. F-type ATPases have 2 components, CF(1) - the catalytic core - and CF(0) - the membrane proton channel. CF(1) has five subunits: alpha(3), beta(3), gamma(1), delta(1), epsilon(1). CF(0) has three main subunits: a(1), b(2) and c(9-12). The alpha and beta chains form an alternating ring which encloses part of the gamma chain. CF(1) is attached to CF(0) by a central stalk formed by the gamma and epsilon chains, while a peripheral stalk is formed by the delta and b chains.

It localises to the cell inner membrane. Its function is as follows. Key component of the proton channel; it plays a direct role in the translocation of protons across the membrane. This Paramagnetospirillum magneticum (strain ATCC 700264 / AMB-1) (Magnetospirillum magneticum) protein is ATP synthase subunit a.